Reading from the N-terminus, the 637-residue chain is Chaperone protein HtpG (637 aa).

The interval 1 to 345 is a; substrate-binding; sequence MSQQETHGFQ…SNDLPLNVSR (345 aa). The segment at 346-562 is b; it reads EILQDNHITK…EGEMSSQMIK (217 aa). The c stretch occupies residues 563–637; sequence LMQAAGQPVP…MNQMLLANLK (75 aa).

This sequence belongs to the heat shock protein 90 family. In terms of assembly, homodimer.

The protein resides in the cytoplasm. Functionally, molecular chaperone. Has ATPase activity. In Shewanella sp. (strain MR-7), this protein is Chaperone protein HtpG.